We begin with the raw amino-acid sequence, 113 residues long: Hydrogenase maturation factor HypA (113 aa).

His2 provides a ligand contact to Ni(2+). The Zn(2+) site is built by Cys73, Cys76, Cys89, and Cys92.

This sequence belongs to the HypA/HybF family.

Its function is as follows. Involved in the maturation of [NiFe] hydrogenases. Required for nickel insertion into the metal center of the hydrogenase. This is Hydrogenase maturation factor HypA from Rhodobacter capsulatus (Rhodopseudomonas capsulata).